The sequence spans 145 residues: 3-dehydroquinate dehydratase (145 aa).

Catalysis depends on Tyr-22, which acts as the Proton acceptor. 3 residues coordinate substrate: Asn-71, His-77, and Asp-84. His-97 serves as the catalytic Proton donor. Residues 98 to 99 (IS) and Arg-108 contribute to the substrate site.

The protein belongs to the type-II 3-dehydroquinase family. In terms of assembly, homododecamer.

The catalysed reaction is 3-dehydroquinate = 3-dehydroshikimate + H2O. It participates in metabolic intermediate biosynthesis; chorismate biosynthesis; chorismate from D-erythrose 4-phosphate and phosphoenolpyruvate: step 3/7. In terms of biological role, catalyzes a trans-dehydration via an enolate intermediate. The protein is 3-dehydroquinate dehydratase of Exiguobacterium sp. (strain ATCC BAA-1283 / AT1b).